Consider the following 633-residue polypeptide: Probable potassium transport system protein Kup (633 aa).

12 consecutive transmembrane segments (helical) span residues M21–L41, I61–V81, L112–P132, G149–Q169, I176–V196, F217–T237, W258–L278, L290–I310, I348–F368, A377–M397, L398–V418, and I430–T450.

Belongs to the HAK/KUP transporter (TC 2.A.72) family.

It is found in the cell inner membrane. It catalyses the reaction K(+)(in) + H(+)(in) = K(+)(out) + H(+)(out). Functionally, transport of potassium into the cell. Likely operates as a K(+):H(+) symporter. This is Probable potassium transport system protein Kup from Pseudomonas fluorescens (strain Pf0-1).